An 88-amino-acid chain; its full sequence is UPF0495 protein DEHA2C16280g (88 aa).

The chain crosses the membrane as a helical span at residues 25–47; sequence YPLFAAMGVAVASGCFFTYRHFA.

It belongs to the UPF0495 family.

It localises to the membrane. In Debaryomyces hansenii (strain ATCC 36239 / CBS 767 / BCRC 21394 / JCM 1990 / NBRC 0083 / IGC 2968) (Yeast), this protein is UPF0495 protein DEHA2C16280g.